We begin with the raw amino-acid sequence, 99 residues long: uncharacterized protein (99 aa).

This is an uncharacterized protein from Saccharolobus islandicus (Sulfolobus islandicus).